Reading from the N-terminus, the 295-residue chain is Guided entry of tail-anchored proteins factor CAMLG (295 aa).

Disordered regions lie at residues 1-73 (MEPM…ILNP) and 127-148 (GVELRQRNRGDLTADSAPRGSH). Topologically, residues 1-188 (MEPMPSATDG…RTTEEFDSFR (188 aa)) are cytoplasmic. The span at 15-24 (ATPSGLSASQ) shows a compositional bias: polar residues. Serine 53 is modified (phosphoserine). Over residues 127–138 (GVELRQRNRGDL) the composition is skewed to basic and acidic residues. A helical membrane pass occupies residues 189 to 206 (IFRLVGCALLALVVRAFV). Topologically, residues 207-208 (CK) are lumenal. Cysteine 207 and cysteine 283 are oxidised to a cystine. Residues 209 to 227 (YLSIFAPFLTLQLAYMGLY) traverse the membrane as a helical segment. At 228–268 (KYFPKGEKKVKTTVLTAALLLSGIPAEVINRSMDTYSKMGE) the chain is on the cytoplasmic side. The chain crosses the membrane as a helical span at residues 269–287 (VFTDLCVYFFTFIFCHEVL). The Lumenal segment spans residues 288 to 295 (EYWGPEVP).

In terms of assembly, component of the Golgi to ER traffic (GET) complex, which is composed of GET1/WRB, CAMLG/GET2 and GET3/TRC40. Within the complex, GET1 and CAMLG form a heterotetramer which is stabilized by phosphatidylinositol binding and which binds to the GET3 homodimer. Interacts (via C-terminus) with GET1. Interacts (via N-terminus) with GET3. GET3 shows a higher affinity for CAMLG than for GET1. Interacts (via N-terminus) with TNFRSF13B/TACI (via C-terminus). As to expression, in the central nervous system, expressed in astrocytes, microglia and neurons (at protein level).

It is found in the endoplasmic reticulum membrane. Its function is as follows. Required for the post-translational delivery of tail-anchored (TA) proteins to the endoplasmic reticulum. Together with GET1/WRB, acts as a membrane receptor for soluble GET3/TRC40, which recognizes and selectively binds the transmembrane domain of TA proteins in the cytosol. Required for the stability of GET1. Stimulates calcium signaling in T cells through its involvement in elevation of intracellular calcium. Essential for the survival of peripheral follicular B cells. This chain is Guided entry of tail-anchored proteins factor CAMLG, found in Rattus norvegicus (Rat).